A 212-amino-acid chain; its full sequence is External core antigen (212 aa).

The first 19 residues, 1–19, serve as a signal peptide directing secretion; that stretch reads MQLFHLCLIIFCSCPTVQA. Residues 25-27 are HBEAG; that stretch reads GWL. The segment at 165-212 is disordered; the sequence is NAPILSTLPETTVVRRRGRSPRRRTPSPRRRRSQSPRRRRSQSPASQC. Residues 178–205 are compositionally biased toward basic residues; sequence VRRRGRSPRRRTPSPRRRRSQSPRRRRS. Tandem repeats lie at residues 184–190, 191–198, and 199–206. Residues 184-206 are 3 X 8 AA repeats of S-P-R-R-R-R-S-Q; the sequence is SPRRRTPSPRRRRSQSPRRRRSQ. The propeptide occupies 184–212; it reads SPRRRTPSPRRRRSQSPRRRRSQSPASQC.

The protein belongs to the orthohepadnavirus precore antigen family. In terms of assembly, homodimerizes. Phosphorylated. In terms of processing, cleaved by host furin.

It is found in the secreted. It localises to the host nucleus. May regulate immune response to the intracellular capsid in acting as a T-cell tolerogen, by having an immunoregulatory effect which prevents destruction of infected cells by cytotoxic T-cells. This immune regulation may predispose to chronicity during perinatal infections and prevent severe liver injury during adult infections. This Hepatitis B virus genotype F2 (isolate Brazil/w4B) (HBV-F) protein is External core antigen.